Consider the following 155-residue polypeptide: Small ribosomal subunit protein uS7 (155 aa).

It belongs to the universal ribosomal protein uS7 family. In terms of assembly, part of the 30S ribosomal subunit. Contacts proteins S9 and S11.

Its function is as follows. One of the primary rRNA binding proteins, it binds directly to 16S rRNA where it nucleates assembly of the head domain of the 30S subunit. Is located at the subunit interface close to the decoding center, probably blocks exit of the E-site tRNA. This chain is Small ribosomal subunit protein uS7, found in Thermotoga neapolitana (strain ATCC 49049 / DSM 4359 / NBRC 107923 / NS-E).